The primary structure comprises 70 residues: Putative membrane protein insertion efficiency factor (70 aa).

The protein belongs to the UPF0161 family.

The protein resides in the cell inner membrane. In terms of biological role, could be involved in insertion of integral membrane proteins into the membrane. This is Putative membrane protein insertion efficiency factor from Methylobacillus flagellatus (strain ATCC 51484 / DSM 6875 / VKM B-1610 / KT).